A 499-amino-acid chain; its full sequence is Phenylalanine--tRNA ligase alpha subunit B (499 aa).

L-phenylalanine-binding positions include T330, 373–375, and Y413; that span reads QIE. E415 lines the Mg(2+) pocket. Position 439 (F439) interacts with L-phenylalanine.

It belongs to the class-II aminoacyl-tRNA synthetase family. Phe-tRNA synthetase alpha subunit type 2 subfamily. As to quaternary structure, heterotetramer; dimer of two heterodimers formed by alpha and beta subunits. It depends on Mg(2+) as a cofactor.

The protein localises to the cytoplasm. The catalysed reaction is tRNA(Phe) + L-phenylalanine + ATP = L-phenylalanyl-tRNA(Phe) + AMP + diphosphate + H(+). The protein is Phenylalanine--tRNA ligase alpha subunit B (farsa-b) of Xenopus laevis (African clawed frog).